Consider the following 281-residue polypeptide: MLKIAVPNKGSLSERAMEILNEAGYAGRGDSKSLNVLDSANDVEFFYLRPKDIAIYVAGGQLDLGITGRDLAADSRADVHEVLSLGFGSSTFRYAAPAGQGWSIEKLEGKRIATSYPNLVRDDLAARGITAEVIRLDGAVEISIKLGVADAIADVVSTGRTLRQQGLEPFGESLCTSEAVIVGRRDEEITPAQRVLLSRIQGILHAQNYLMLDYNVDRDRLDEASAVTPGISGPTVSPLARENWVAVRAMVPLKSANATMDKLASIGAEAILASEIRIARI.

Belongs to the ATP phosphoribosyltransferase family. Long subfamily. Mg(2+) is required as a cofactor.

It is found in the cytoplasm. The enzyme catalyses 1-(5-phospho-beta-D-ribosyl)-ATP + diphosphate = 5-phospho-alpha-D-ribose 1-diphosphate + ATP. It functions in the pathway amino-acid biosynthesis; L-histidine biosynthesis; L-histidine from 5-phospho-alpha-D-ribose 1-diphosphate: step 1/9. With respect to regulation, feedback inhibited by histidine. Its function is as follows. Catalyzes the condensation of ATP and 5-phosphoribose 1-diphosphate to form N'-(5'-phosphoribosyl)-ATP (PR-ATP). Has a crucial role in the pathway because the rate of histidine biosynthesis seems to be controlled primarily by regulation of HisG enzymatic activity. The polypeptide is ATP phosphoribosyltransferase (Corynebacterium efficiens (strain DSM 44549 / YS-314 / AJ 12310 / JCM 11189 / NBRC 100395)).